The primary structure comprises 323 residues: Putative CDC123-like protein L884 (323 aa).

This sequence belongs to the CDC123 family.

This is Putative CDC123-like protein L884 from Acanthamoeba polyphaga mimivirus (APMV).